A 311-amino-acid chain; its full sequence is p-hydroxybenzoic acid efflux pump subunit AaeA (311 aa).

Residues 11–31 (VGITVLVVVLAVIAIFNVWAF) traverse the membrane as a helical segment.

The protein belongs to the membrane fusion protein (MFP) (TC 8.A.1) family.

The protein localises to the cell inner membrane. Its function is as follows. Forms an efflux pump with AaeB. The polypeptide is p-hydroxybenzoic acid efflux pump subunit AaeA (Yersinia pestis bv. Antiqua (strain Antiqua)).